A 271-amino-acid polypeptide reads, in one-letter code: tRNA pseudouridine synthase A (271 aa).

Aspartate 54 acts as the Nucleophile in catalysis. Substrate is bound at residue tyrosine 112.

Belongs to the tRNA pseudouridine synthase TruA family. In terms of assembly, homodimer.

The catalysed reaction is uridine(38/39/40) in tRNA = pseudouridine(38/39/40) in tRNA. Formation of pseudouridine at positions 38, 39 and 40 in the anticodon stem and loop of transfer RNAs. The protein is tRNA pseudouridine synthase A of Acinetobacter baylyi (strain ATCC 33305 / BD413 / ADP1).